The sequence spans 397 residues: MVERARRLGRWFLALDSLLVILGFFVVMPMISLRFVDQQGWAAGIVGLALGLRQLTQQGLGVLGGSLADKFGARPLIVGGMLLRAAGFASLAYAQSGLELILSCIISGLGGCLFDPPRAALVIKFTRPRQRGRYISLLMMLESAGAVVGALLGSWLLNFDFEYVCLLGAGLFVCAALCNLLILPPYKLSQRPTPIRAGLGQVLADKAFCRLVLILSGYYALWVQVMLIFPILVKQMAGTTTAVGWMYTLETAISLTLLYPLARYGEKHFKLENRLMAGVLLMTTGIGLVAFATTLPAVFVLLACFYLGIVIAEPARETLMTKLAQPGARGSYMGFSRLGLALGGMTGYVGGGALHDYANAQGQPWLPWLVLGTVGVTTLLLLVNCFHREPSLARVNI.

10 helical membrane passes run 11–31 (WFLALDSLLVILGFFVVMPMI), 71–91 (FGARPLIVGGMLLRAAGFASL), 94–114 (AQSGLELILSCIISGLGGCLF), 137–157 (LLMMLESAGAVVGALLGSWLL), 163–183 (YVCLLGAGLFVCAALCNLLIL), 211–231 (LVLILSGYYALWVQVMLIFPI), 242–262 (AVGWMYTLETAISLTLLYPLA), 291–311 (FATTLPAVFVLLACFYLGIVI), 338–358 (LGLALGGMTGYVGGGALHDYA), and 366–386 (LPWLVLGTVGVTTLLLLVNCF).

It belongs to the major facilitator superfamily. DHA1 family. MdtH (TC 2.A.1.2.21) subfamily.

It localises to the cell inner membrane. The sequence is that of Multidrug resistance protein MdtH from Aeromonas salmonicida (strain A449).